We begin with the raw amino-acid sequence, 98 residues long: NADH-ubiquinone oxidoreductase chain 4L (98 aa).

3 consecutive transmembrane segments (helical) span residues Met-1–Ile-21, Ser-28–Ile-48, and Ala-59–Val-79.

It belongs to the complex I subunit 4L family. Core subunit of respiratory chain NADH dehydrogenase (Complex I) which is composed of 45 different subunits.

It is found in the mitochondrion inner membrane. The catalysed reaction is a ubiquinone + NADH + 5 H(+)(in) = a ubiquinol + NAD(+) + 4 H(+)(out). Functionally, core subunit of the mitochondrial membrane respiratory chain NADH dehydrogenase (Complex I) which catalyzes electron transfer from NADH through the respiratory chain, using ubiquinone as an electron acceptor. Part of the enzyme membrane arm which is embedded in the lipid bilayer and involved in proton translocation. The sequence is that of NADH-ubiquinone oxidoreductase chain 4L (MT-ND4L) from Tarsipes rostratus (Honey possum).